We begin with the raw amino-acid sequence, 149 residues long: D-aminoacyl-tRNA deacylase (149 aa).

Positions 137 to 138 (GP) match the Gly-cisPro motif, important for rejection of L-amino acids motif.

The protein belongs to the DTD family. In terms of assembly, homodimer.

It localises to the cytoplasm. It carries out the reaction glycyl-tRNA(Ala) + H2O = tRNA(Ala) + glycine + H(+). It catalyses the reaction a D-aminoacyl-tRNA + H2O = a tRNA + a D-alpha-amino acid + H(+). Functionally, an aminoacyl-tRNA editing enzyme that deacylates mischarged D-aminoacyl-tRNAs. Also deacylates mischarged glycyl-tRNA(Ala), protecting cells against glycine mischarging by AlaRS. Acts via tRNA-based rather than protein-based catalysis; rejects L-amino acids rather than detecting D-amino acids in the active site. By recycling D-aminoacyl-tRNA to D-amino acids and free tRNA molecules, this enzyme counteracts the toxicity associated with the formation of D-aminoacyl-tRNA entities in vivo and helps enforce protein L-homochirality. The chain is D-aminoacyl-tRNA deacylase from Syntrophobacter fumaroxidans (strain DSM 10017 / MPOB).